The following is a 260-amino-acid chain: Aspartate/glutamate leucyltransferase (260 aa).

Positions Asp-241 to Pro-251 are enriched in basic and acidic residues. Positions Asp-241 to Glu-260 are disordered.

The protein belongs to the R-transferase family. Bpt subfamily.

Its subcellular location is the cytoplasm. The catalysed reaction is N-terminal L-glutamyl-[protein] + L-leucyl-tRNA(Leu) = N-terminal L-leucyl-L-glutamyl-[protein] + tRNA(Leu) + H(+). It carries out the reaction N-terminal L-aspartyl-[protein] + L-leucyl-tRNA(Leu) = N-terminal L-leucyl-L-aspartyl-[protein] + tRNA(Leu) + H(+). Its function is as follows. Functions in the N-end rule pathway of protein degradation where it conjugates Leu from its aminoacyl-tRNA to the N-termini of proteins containing an N-terminal aspartate or glutamate. In Gluconacetobacter diazotrophicus (strain ATCC 49037 / DSM 5601 / CCUG 37298 / CIP 103539 / LMG 7603 / PAl5), this protein is Aspartate/glutamate leucyltransferase.